The primary structure comprises 77 residues: U-actitoxin-Avd12a (77 aa).

An N-terminal signal peptide occupies residues 1–23 (MALFRMLFLCAVLVLLTSKEGMS). Positions 24-29 (YEEPEN) are excised as a propeptide. Residues 31 to 73 (EGVACTGQYAESFCLNGGTCRYIQSIGEYYCICNGDYTGHRCE) form the EGF-like domain. 3 cysteine pairs are disulfide-bonded: C35-C50, C44-C61, and C63-C72.

The protein belongs to the EGF domain peptide family.

The protein resides in the secreted. Its subcellular location is the nematocyst. Has both toxic and EGF activity. Its EGF activity consists of rounding cells (morphological change) and inducing tyrosine phosphorylation of the EGFR in A431 cells, but with a lower potency that human EGF. This chain is U-actitoxin-Avd12a, found in Anemonia viridis (Snakelocks anemone).